A 129-amino-acid chain; its full sequence is Small ribosomal subunit protein uS8mz (129 aa).

The protein belongs to the universal ribosomal protein uS8 family. In terms of assembly, component of the mitochondrial ribosome small subunit.

The protein localises to the mitochondrion. This is Small ribosomal subunit protein uS8mz (RPS15AB) from Arabidopsis thaliana (Mouse-ear cress).